Consider the following 119-residue polypeptide: Acidic phospholipase A2 E (119 aa).

7 disulfide bridges follow: Cys11–Cys71, Cys26–Cys118, Cys28–Cys44, Cys43–Cys99, Cys50–Cys92, Cys60–Cys85, and Cys78–Cys90. Residues Tyr27, Gly29, and Gly31 each contribute to the Ca(2+) site. His47 is a catalytic residue. Residue Asp48 coordinates Ca(2+). Asp93 is a catalytic residue.

This sequence belongs to the phospholipase A2 family. Group I subfamily. D49 sub-subfamily. Ca(2+) serves as cofactor. In terms of tissue distribution, expressed by the venom gland.

It is found in the secreted. The enzyme catalyses a 1,2-diacyl-sn-glycero-3-phosphocholine + H2O = a 1-acyl-sn-glycero-3-phosphocholine + a fatty acid + H(+). Functionally, PLA2 catalyzes the calcium-dependent hydrolysis of the 2-acyl groups in 3-sn-phosphoglycerides. The protein is Acidic phospholipase A2 E of Naja oxiana (Central Asian cobra).